The chain runs to 264 residues: MKQYLDLMKKVLEEGTAKDDRTGTGTRSIFGHQMRFNLQEGFPLVTTKRCHLRSIIHELLWFLNGDTNIKYLHDNGVSIWDEWADENGDLGPVYGKQWRAWGSADGRHIDQLTQVLEQLKGDPDSRRIIVSAWNVGELDKMALAPCHAFFQFYVADGKLSCQLYQRSCDVFLGLPFNIASYALLVHMMAQQCNLDVGDFVWTGGDTHLYNNHLEQTHLQLSREPRALPKLVIKRKPDSLFDYRFEDFEIVDYDPYPGIKAPVAI.

Residue R21 coordinates dUMP. H51 is a (6R)-5,10-methylene-5,6,7,8-tetrahydrofolate binding site. A dUMP-binding site is contributed by 126–127; that stretch reads RR. Catalysis depends on C146, which acts as the Nucleophile. DUMP is bound by residues 166 to 169, N177, and 207 to 209; these read RSCD and HLY. D169 contacts (6R)-5,10-methylene-5,6,7,8-tetrahydrofolate. A263 contacts (6R)-5,10-methylene-5,6,7,8-tetrahydrofolate.

The protein belongs to the thymidylate synthase family. Bacterial-type ThyA subfamily. As to quaternary structure, homodimer.

Its subcellular location is the cytoplasm. The enzyme catalyses dUMP + (6R)-5,10-methylene-5,6,7,8-tetrahydrofolate = 7,8-dihydrofolate + dTMP. Its pathway is pyrimidine metabolism; dTTP biosynthesis. Its function is as follows. Catalyzes the reductive methylation of 2'-deoxyuridine-5'-monophosphate (dUMP) to 2'-deoxythymidine-5'-monophosphate (dTMP) while utilizing 5,10-methylenetetrahydrofolate (mTHF) as the methyl donor and reductant in the reaction, yielding dihydrofolate (DHF) as a by-product. This enzymatic reaction provides an intracellular de novo source of dTMP, an essential precursor for DNA biosynthesis. This chain is Thymidylate synthase, found in Xenorhabdus nematophila (strain ATCC 19061 / DSM 3370 / CCUG 14189 / LMG 1036 / NCIMB 9965 / AN6).